Here is a 274-residue protein sequence, read N- to C-terminus: Putative ABC transporter ATP-binding protein MM_1037 (274 aa).

The ABC transporter domain maps to 2–235 (IRLENVSYCY…PSLKDLGLTP (234 aa)). 35–42 (GRNGSGKS) contacts ATP.

Belongs to the ABC transporter superfamily.

The protein localises to the cell membrane. Functionally, probably part of an ABC transporter complex. Responsible for energy coupling to the transport system. This is Putative ABC transporter ATP-binding protein MM_1037 from Methanosarcina mazei (strain ATCC BAA-159 / DSM 3647 / Goe1 / Go1 / JCM 11833 / OCM 88) (Methanosarcina frisia).